The sequence spans 925 residues: Leucine--tRNA ligase (925 aa).

Positions 40 to 51 (PYPSGAGLHVGH) match the 'HIGH' region motif. The 'KMSKS' region motif lies at 700 to 704 (KMSKS). K703 contributes to the ATP binding site.

It belongs to the class-I aminoacyl-tRNA synthetase family.

The protein resides in the cytoplasm. The catalysed reaction is tRNA(Leu) + L-leucine + ATP = L-leucyl-tRNA(Leu) + AMP + diphosphate. This is Leucine--tRNA ligase from Porphyromonas gingivalis (strain ATCC 33277 / DSM 20709 / CIP 103683 / JCM 12257 / NCTC 11834 / 2561).